A 104-amino-acid chain; its full sequence is Fusaric acid biosynthesis protein 2 (104 aa).

Belongs to the YciI family.

It participates in mycotoxin biosynthesis. Its function is as follows. Part of the gene cluster that mediates the biosynthesis of fusaric acid, a mycotoxin with low to moderate toxicity to animals and humans, but with high phytotoxic properties. L-aspartate is suggested as fusaric acid amino acid precursor that is activated and further processed to O-acetyl-L-homoserine by cluster enzymes aspartate kinase FUB3 and homoserine O-acetyltransferase FUB5, as well as enzymes of the primary metabolism. The polyketide synthase (PKS) FUB1 generates the triketide trans-2-hexenal which is presumptively released by the hydrolase FUB4 and linked to the NRPS-bound amino acid precursor by NAD(P)-dependent dehydrogenase FUB6. FUB1, FUB4, and the non-canonical NRPS Fub8 may form an enzyme complex. Further processing of the NRPS-bound intermediate might be carried out by FUB6 and the sulfhydrylase FUB7, enabling a spontaneous electrocyclization to close the carbon backbone of fusaric acid. Dihydrofusaric acid is likely to be released via reduction by the thioester reductase (TR) domain of FUB8 whereupon the final oxidation to fusaric acid may (also) be performed by the FMN-dependent dehydrogenase FUB9. The protein is Fusaric acid biosynthesis protein 2 of Gibberella fujikuroi (strain CBS 195.34 / IMI 58289 / NRRL A-6831) (Bakanae and foot rot disease fungus).